We begin with the raw amino-acid sequence, 167 residues long: CASP-like protein UU1 (167 aa).

Over 1–17 (MVELESQEAVTVASTAD) the chain is Cytoplasmic. A helical transmembrane segment spans residues 18–38 (IAVDVSLRLLAAATSLASAVV). The Extracellular segment spans residues 39 to 54 (VAANHQQRWGVRVDFT). The chain crosses the membrane as a helical span at residues 55-75 (LFQVWIGFVAVNLVCTVYAAA). Residues 76 to 94 (TAAAARKAMGRWWLHHADA) lie on the Cytoplasmic side of the membrane. The helical transmembrane segment at 95–115 (VVVNLEAAATAGAGAIGSIAM) threads the bilayer. Residues 116–135 (WGNEASGWYAVCRLYRRYCN) are Extracellular-facing. The chain crosses the membrane as a helical span at residues 136–156 (AGAAALALSLAAVLLLGVACA). Residues 157–167 (RSRYPKMPPTT) are Cytoplasmic-facing.

Belongs to the Casparian strip membrane proteins (CASP) family. Homodimer and heterodimers.

The protein localises to the cell membrane. This Oryza sativa subsp. indica (Rice) protein is CASP-like protein UU1.